The primary structure comprises 50 residues: Protein PsbN (50 aa).

Residues 14 to 34 form a helical membrane-spanning segment; sequence VAVTILAVLLALTGFGLWTAF.

Belongs to the PsbN family.

Its subcellular location is the cellular thylakoid membrane. In terms of biological role, may play a role in photosystem I and II biogenesis. The protein is Protein PsbN of Prochlorococcus marinus subsp. pastoris (strain CCMP1986 / NIES-2087 / MED4).